We begin with the raw amino-acid sequence, 380 residues long: Outer membrane protein 40 (380 aa).

A signal peptide spans 1-21; it reads MKAKSLLLALAGLACTFSATA. Residue Gln-22 is modified to Pyrrolidone carboxylic acid. An OmpA-like domain is found at 270 to 380; sequence PTVTRVVVDN…NRIVVMTAAE (111 aa).

It belongs to the outer membrane OOP (TC 1.B.6) superfamily. Disulfide-linked heterodimer with Omp41.

It is found in the cell outer membrane. Its function is as follows. May have porin activity and function in peptidoglycan binding. The protein is Outer membrane protein 40 of Porphyromonas gingivalis (strain ATCC BAA-308 / W83).